A 38-amino-acid polypeptide reads, in one-letter code: Photosystem II reaction center protein L (38 aa).

The chain crosses the membrane as a helical span at residues 17–37 (SLYWGLLLIFVLAVLFSNYFF).

Belongs to the PsbL family. As to quaternary structure, PSII is composed of 1 copy each of membrane proteins PsbA, PsbB, PsbC, PsbD, PsbE, PsbF, PsbH, PsbI, PsbJ, PsbK, PsbL, PsbM, PsbT, PsbX, PsbY, PsbZ, Psb30/Ycf12, at least 3 peripheral proteins of the oxygen-evolving complex and a large number of cofactors. It forms dimeric complexes.

It is found in the plastid. It localises to the chloroplast thylakoid membrane. One of the components of the core complex of photosystem II (PSII). PSII is a light-driven water:plastoquinone oxidoreductase that uses light energy to abstract electrons from H(2)O, generating O(2) and a proton gradient subsequently used for ATP formation. It consists of a core antenna complex that captures photons, and an electron transfer chain that converts photonic excitation into a charge separation. This subunit is found at the monomer-monomer interface and is required for correct PSII assembly and/or dimerization. The polypeptide is Photosystem II reaction center protein L (Oenothera argillicola (Appalachian evening primrose)).